A 499-amino-acid polypeptide reads, in one-letter code: Ribose import ATP-binding protein RbsA (499 aa).

ABC transporter domains are found at residues 3–240 (VEMT…VGRA) and 250–494 (LTPG…TGGD). Residue 35–42 (GENGAGKS) coordinates ATP.

It belongs to the ABC transporter superfamily. Ribose importer (TC 3.A.1.2.1) family. The complex is composed of an ATP-binding protein (RbsA), two transmembrane proteins (RbsC) and a solute-binding protein (RbsB).

It is found in the cell membrane. The catalysed reaction is D-ribose(out) + ATP + H2O = D-ribose(in) + ADP + phosphate + H(+). Functionally, part of the ABC transporter complex RbsABC involved in ribose import. Responsible for energy coupling to the transport system. In Halalkalibacterium halodurans (strain ATCC BAA-125 / DSM 18197 / FERM 7344 / JCM 9153 / C-125) (Bacillus halodurans), this protein is Ribose import ATP-binding protein RbsA.